Here is a 180-residue protein sequence, read N- to C-terminus: NAD(P)H-quinone oxidoreductase subunit 6, chloroplastic (180 aa).

Transmembrane regions (helical) follow at residues I10–T30, I32–L52, F57–A77, V95–I115, and F153–I173.

Belongs to the complex I subunit 6 family. As to quaternary structure, NDH is composed of at least 16 different subunits, 5 of which are encoded in the nucleus.

The protein resides in the plastid. It is found in the chloroplast thylakoid membrane. The enzyme catalyses a plastoquinone + NADH + (n+1) H(+)(in) = a plastoquinol + NAD(+) + n H(+)(out). It carries out the reaction a plastoquinone + NADPH + (n+1) H(+)(in) = a plastoquinol + NADP(+) + n H(+)(out). Its function is as follows. NDH shuttles electrons from NAD(P)H:plastoquinone, via FMN and iron-sulfur (Fe-S) centers, to quinones in the photosynthetic chain and possibly in a chloroplast respiratory chain. The immediate electron acceptor for the enzyme in this species is believed to be plastoquinone. Couples the redox reaction to proton translocation, and thus conserves the redox energy in a proton gradient. The protein is NAD(P)H-quinone oxidoreductase subunit 6, chloroplastic (ndhG) of Cycas taitungensis (Prince sago).